A 453-amino-acid polypeptide reads, in one-letter code: tRNA-2-methylthio-N(6)-dimethylallyladenosine synthase (453 aa).

An MTTase N-terminal domain is found at 4–118 (KKFYIENYGC…IPNLINNFFK (115 aa)). 6 residues coordinate [4Fe-4S] cluster: cysteine 13, cysteine 49, cysteine 83, cysteine 156, cysteine 160, and cysteine 163. The Radical SAM core domain occupies 142 to 388 (EEKKITAFVT…NLQKTHSYYR (247 aa)). A TRAM domain is found at 390 to 453 (RKYIGSIQDI…SATLVGDIYV (64 aa)).

Belongs to the methylthiotransferase family. MiaB subfamily. Monomer. It depends on [4Fe-4S] cluster as a cofactor.

It localises to the cytoplasm. The enzyme catalyses N(6)-dimethylallyladenosine(37) in tRNA + (sulfur carrier)-SH + AH2 + 2 S-adenosyl-L-methionine = 2-methylsulfanyl-N(6)-dimethylallyladenosine(37) in tRNA + (sulfur carrier)-H + 5'-deoxyadenosine + L-methionine + A + S-adenosyl-L-homocysteine + 2 H(+). In terms of biological role, catalyzes the methylthiolation of N6-(dimethylallyl)adenosine (i(6)A), leading to the formation of 2-methylthio-N6-(dimethylallyl)adenosine (ms(2)i(6)A) at position 37 in tRNAs that read codons beginning with uridine. This Karelsulcia muelleri (strain GWSS) (Sulcia muelleri) protein is tRNA-2-methylthio-N(6)-dimethylallyladenosine synthase.